Consider the following 426-residue polypeptide: MSKSENLYSAARELIPGGVNSPVRAFTGVGGTPLFIEKADGAYLYDVDGKAYIDYVGSWGPMVLGHNHPAIRNAVIEAAERGLSFGAPTEMEVKMAELVTNLVPTMDMVRMVNSGTEATMSAIRLARGFTGRDKIIKFEGCYHGHADCLLVKAGSGALTLGQPNSPGVPADFAKHTLTCTYNDLTSVRAAFEQYPQEIASIIVEPVAGNMNCVPPLPEFLPGLRALCDEFGALLIIDEVMTGFRVALAGAQDYYGVVPDLTCLGKIIGGGMPVGAFGGRRDVMDALAPTGPVYQAGTLSGNPIAMAAGFACLNEVAQPGIHETLDELTTRLAEGLCEAAQEAGIPLVVNHVGGMFGIFFTDAESVTCYQDVMACDVERFKRFFHLMLEEGVYLAPSAFEAGFMSVAHSMDDINNTIDAARRVFAKL.

At lysine 265 the chain carries N6-(pyridoxal phosphate)lysine.

The protein belongs to the class-III pyridoxal-phosphate-dependent aminotransferase family. HemL subfamily. Homodimer. The cofactor is pyridoxal 5'-phosphate.

It localises to the cytoplasm. The enzyme catalyses (S)-4-amino-5-oxopentanoate = 5-aminolevulinate. It functions in the pathway porphyrin-containing compound metabolism; protoporphyrin-IX biosynthesis; 5-aminolevulinate from L-glutamyl-tRNA(Glu): step 2/2. In Salmonella typhimurium (strain SL1344), this protein is Glutamate-1-semialdehyde 2,1-aminomutase (hemL).